We begin with the raw amino-acid sequence, 24 residues long: Ascaphin-2 (24 aa).

In terms of tissue distribution, expressed by the skin glands.

The protein resides in the secreted. Functionally, antimicrobial peptide that shows higher potency against Gram-negative bacteria than against Gram-positive bacteria. Has a very week hemolytic activity. The chain is Ascaphin-2 from Ascaphus truei (Coastal tailed frog).